A 287-amino-acid polypeptide reads, in one-letter code: Small ribosomal subunit protein uS2 (287 aa).

The segment at 235–287 is disordered; that stretch reads ESGFATGGGDWEATAPAAASGWDDAAAQPQNWDSAAQGAASWDEAAAPKEGQW. The segment covering 247-261 has biased composition (low complexity); that stretch reads ATAPAAASGWDDAAA.

The protein belongs to the universal ribosomal protein uS2 family. As to quaternary structure, component of the small ribosomal subunit. Mature ribosomes consist of a small (40S) and a large (60S) subunit. The 40S subunit contains about 33 different proteins and 1 molecule of RNA (18S). The 60S subunit contains about 49 different proteins and 3 molecules of RNA (25S, 5.8S and 5S). Interacts with RPS21.

The protein localises to the cytoplasm. In terms of biological role, required for the assembly and/or stability of the 40S ribosomal subunit. Required for the processing of the 20S rRNA-precursor to mature 18S rRNA in a late step of the maturation of 40S ribosomal subunits. In Pyricularia oryzae (strain 70-15 / ATCC MYA-4617 / FGSC 8958) (Rice blast fungus), this protein is Small ribosomal subunit protein uS2.